The chain runs to 302 residues: Quinolinate synthase (302 aa).

Iminosuccinate contacts are provided by H24 and S41. C86 contributes to the [4Fe-4S] cluster binding site. Residues 112–114 (YVN) and S129 contribute to the iminosuccinate site. C171 is a binding site for [4Fe-4S] cluster. Iminosuccinate-binding positions include 197-199 (HPE) and T214. C259 contacts [4Fe-4S] cluster.

Belongs to the quinolinate synthase family. Type 2 subfamily. The cofactor is [4Fe-4S] cluster.

It is found in the cytoplasm. It catalyses the reaction iminosuccinate + dihydroxyacetone phosphate = quinolinate + phosphate + 2 H2O + H(+). Its pathway is cofactor biosynthesis; NAD(+) biosynthesis; quinolinate from iminoaspartate: step 1/1. Catalyzes the condensation of iminoaspartate with dihydroxyacetone phosphate to form quinolinate. This is Quinolinate synthase from Dehalococcoides mccartyi (strain ATCC BAA-2100 / JCM 16839 / KCTC 5957 / BAV1).